Here is a 573-residue protein sequence, read N- to C-terminus: SHC-transforming protein 2 (573 aa).

Positions 125-307 constitute a PID domain; sequence LGPGVSYIVR…TGLEESAWGD (183 aa). Residues 478-569 enclose the SH2 domain; the sequence is WYHGRMSRRA…ESELHLRGVV (92 aa).

Interacts with the Trk receptors in a phosphotyrosine-dependent manner and MEGF12. Once activated, binds to GRB2. Post-translationally, phosphorylated on tyrosine by the Trk receptors.

Signaling adapter that couples activated growth factor receptors to signaling pathway in neurons. Involved in the signal transduction pathways of neurotrophin-activated Trk receptors in cortical neurons. In Rattus norvegicus (Rat), this protein is SHC-transforming protein 2 (Shc2).